The chain runs to 426 residues: Bifunctional protein GlmU (426 aa).

The tract at residues 1 to 216 (MSEVDVVILA…WHDILGVNTQ (216 aa)) is pyrophosphorylase. UDP-N-acetyl-alpha-D-glucosamine is bound by residues 9–12 (LAAG), lysine 23, and glutamine 69. Aspartate 97 contributes to the Mg(2+) binding site. 4 residues coordinate UDP-N-acetyl-alpha-D-glucosamine: glycine 132, glutamate 148, asparagine 163, and asparagine 214. Mg(2+) is bound at residue asparagine 214. Residues 217-237 (QQLAAVSKIARKRINDQIMAN) are linker. The N-acetyltransferase stretch occupies residues 238–426 (GVTMIDPLTT…AKHDQRDDQP (189 aa)). Positions 286 and 304 each coordinate UDP-N-acetyl-alpha-D-glucosamine. Histidine 316 functions as the Proton acceptor in the catalytic mechanism. Residues tyrosine 319 and asparagine 330 each coordinate UDP-N-acetyl-alpha-D-glucosamine. Acetyl-CoA contacts are provided by residues alanine 333, 339–340 (NY), serine 358, alanine 376, and arginine 393.

It in the N-terminal section; belongs to the N-acetylglucosamine-1-phosphate uridyltransferase family. This sequence in the C-terminal section; belongs to the transferase hexapeptide repeat family. As to quaternary structure, homotrimer. The cofactor is Mg(2+).

It is found in the cytoplasm. It carries out the reaction alpha-D-glucosamine 1-phosphate + acetyl-CoA = N-acetyl-alpha-D-glucosamine 1-phosphate + CoA + H(+). The enzyme catalyses N-acetyl-alpha-D-glucosamine 1-phosphate + UTP + H(+) = UDP-N-acetyl-alpha-D-glucosamine + diphosphate. Its pathway is nucleotide-sugar biosynthesis; UDP-N-acetyl-alpha-D-glucosamine biosynthesis; N-acetyl-alpha-D-glucosamine 1-phosphate from alpha-D-glucosamine 6-phosphate (route II): step 2/2. The protein operates within nucleotide-sugar biosynthesis; UDP-N-acetyl-alpha-D-glucosamine biosynthesis; UDP-N-acetyl-alpha-D-glucosamine from N-acetyl-alpha-D-glucosamine 1-phosphate: step 1/1. It participates in bacterial outer membrane biogenesis; LPS lipid A biosynthesis. Catalyzes the last two sequential reactions in the de novo biosynthetic pathway for UDP-N-acetylglucosamine (UDP-GlcNAc). The C-terminal domain catalyzes the transfer of acetyl group from acetyl coenzyme A to glucosamine-1-phosphate (GlcN-1-P) to produce N-acetylglucosamine-1-phosphate (GlcNAc-1-P), which is converted into UDP-GlcNAc by the transfer of uridine 5-monophosphate (from uridine 5-triphosphate), a reaction catalyzed by the N-terminal domain. The protein is Bifunctional protein GlmU of Oenococcus oeni (strain ATCC BAA-331 / PSU-1).